A 160-amino-acid polypeptide reads, in one-letter code: Transcriptional regulator MraZ (160 aa).

2 consecutive SpoVT-AbrB domains span residues 5-50 and 93-136; these read KFDT…GDQV and AVEC…SQAV.

The protein belongs to the MraZ family. In terms of assembly, forms oligomers.

It localises to the cytoplasm. The protein resides in the nucleoid. In Geobacter sp. (strain M21), this protein is Transcriptional regulator MraZ.